A 305-amino-acid chain; its full sequence is UDP-3-O-acyl-N-acetylglucosamine deacetylase (305 aa).

3 residues coordinate Zn(2+): His79, His238, and Asp242. His265 functions as the Proton donor in the catalytic mechanism.

It belongs to the LpxC family. Zn(2+) serves as cofactor.

It catalyses the reaction a UDP-3-O-[(3R)-3-hydroxyacyl]-N-acetyl-alpha-D-glucosamine + H2O = a UDP-3-O-[(3R)-3-hydroxyacyl]-alpha-D-glucosamine + acetate. Its pathway is glycolipid biosynthesis; lipid IV(A) biosynthesis; lipid IV(A) from (3R)-3-hydroxytetradecanoyl-[acyl-carrier-protein] and UDP-N-acetyl-alpha-D-glucosamine: step 2/6. Its function is as follows. Catalyzes the hydrolysis of UDP-3-O-myristoyl-N-acetylglucosamine to form UDP-3-O-myristoylglucosamine and acetate, the committed step in lipid A biosynthesis. The chain is UDP-3-O-acyl-N-acetylglucosamine deacetylase from Klebsiella pneumoniae subsp. pneumoniae (strain ATCC 700721 / MGH 78578).